The following is a 287-amino-acid chain: UPF0098 protein AF_1698 (287 aa).

The protein belongs to the UPF0098 family.

This chain is UPF0098 protein AF_1698, found in Archaeoglobus fulgidus (strain ATCC 49558 / DSM 4304 / JCM 9628 / NBRC 100126 / VC-16).